The sequence spans 103 residues: Large ribosomal subunit protein eL14 (103 aa).

The protein belongs to the eukaryotic ribosomal protein eL14 family.

The sequence is that of Large ribosomal subunit protein eL14 from Pyrobaculum aerophilum (strain ATCC 51768 / DSM 7523 / JCM 9630 / CIP 104966 / NBRC 100827 / IM2).